Consider the following 220-residue polypeptide: MADS-box protein AGL24 (220 aa).

Residues 1 to 61 (MAREKIRIKK…GKLFEFSSSR (61 aa)) form the MADS-box domain. The 91-residue stretch at 87-177 (LRLENCNLSR…RDKLETLERA (91 aa)) folds into the K-box domain. Over residues 190 to 200 (SVTTNVSSYDS) the composition is skewed to polar residues. Residues 190–220 (SVTTNVSSYDSGTPLEDDSDTSLKLGLPSWE) form a disordered region.

As to quaternary structure, interacts with IMK3/MRLK. Forms a homodimer and heterodimer with SOC1, AP1 and SVP through MADS-box domain. Interacts with the SEU-LUG corepressor complex when complexed to AP1. Interacts with AGL15 and AGL16. Post-translationally, phosphorylated by IMK3. Induced by vernalization. As to expression, mostly expressed in shoot apical meristems, including floral meristems. Also detected in stems, seedlings, leaves, flowers and siliques, and, to a lower extent, in roots.

The protein localises to the nucleus. The protein resides in the cytoplasm. Functionally, transcription activator that mediates floral transition in response to vernalization. Promotes inflorescence fate in apical meristems. Acts in a dosage-dependent manner. Probably involved in the transduction of RLK-mediated signaling (e.g. IMK3 pathway). Together with AP1 and SVP, controls the identity of the floral meristem and regulates expression of class B, C and E genes. When associated with SOC1, mediates effect of gibberellins on flowering under short-day conditions, and regulates the expression of LEAFY (LFY), which links floral induction and floral development. Confers inflorescence characteristics to floral primordia and early flowering. This Arabidopsis thaliana (Mouse-ear cress) protein is MADS-box protein AGL24 (AGL24).